Reading from the N-terminus, the 271-residue chain is Non-homologous end joining protein Ku (271 aa).

The Ku domain maps to 12-194 (KLSLVTCPVV…DQKPVPELLS (183 aa)). Positions 225-249 (EAKKTPPAKKTKAEEKTGKGSAESN) are disordered.

This sequence belongs to the prokaryotic Ku family. As to quaternary structure, homodimer. Interacts with LigD.

Its function is as follows. With LigD forms a non-homologous end joining (NHEJ) DNA repair enzyme, which repairs dsDNA breaks with reduced fidelity. Binds linear dsDNA with 5'- and 3'- overhangs but not closed circular dsDNA nor ssDNA. Recruits and stimulates the ligase activity of LigD. The protein is Non-homologous end joining protein Ku of Methylocella silvestris (strain DSM 15510 / CIP 108128 / LMG 27833 / NCIMB 13906 / BL2).